Here is a 905-residue protein sequence, read N- to C-terminus: Transcriptional regulator MNL1 (905 aa).

Over residues 1 to 29 the composition is skewed to polar residues; the sequence is MDSHNNIDQSVSELLSDPASVQQSYNSQL. 8 disordered regions span residues 1 to 34, 312 to 340, 383 to 419, 434 to 460, 525 to 544, 584 to 613, 625 to 671, and 685 to 733; these read MDSH…GPEF, QTQA…ASHT, MDQV…NARY, SEKN…NLLS, TKEE…KPKR, NISS…SESS, NVGK…GTVE, and PASE…TSST. Over residues 312-334 the composition is skewed to low complexity; that stretch reads QTQAQAQAHQQQQQQSQQQHSPQ. Positions 439–460 are enriched in low complexity; the sequence is NHNNRSPPTPPTSTSSPQNLLS. Residues 584-598 are compositionally biased toward polar residues; sequence NISSHHSSGTPSITT. The span at 628 to 639 shows a compositional bias: basic residues; sequence KRKNKSYRKPKG. Composition is skewed to low complexity over residues 647 to 669 and 690 to 710; these read QQQQ…STGT and SSLL…EASS. C2H2-type zinc fingers lie at residues 832–855 and 861–883; these read YLCN…RSLH and YNCD…LKIH. The disordered stretch occupies residues 885–905; it reads QEDEKDCADAETGVGMDDASG.

It localises to the nucleus. Its function is as follows. Transcription factor that activates stress response genes via SLE (STRE-like) elements. Required for adaptation to weak acid stress such as acetic acid stress, but seems not involved in the response to heat, osmotic, ethanol, nutrient, oxidative, or heavy-metal stress. Activates a subset of the genes that are repressed by NRG1. The chain is Transcriptional regulator MNL1 (MNL1) from Candida albicans (strain SC5314 / ATCC MYA-2876) (Yeast).